The chain runs to 487 residues: Catalase (487 aa).

The tract at residues 1–20 (MSQRVLTTESGAPVADNQNS) is disordered. Active-site residues include His54 and Asn127. A heme-binding site is contributed by Tyr337.

It belongs to the catalase family. Heme serves as cofactor.

It catalyses the reaction 2 H2O2 = O2 + 2 H2O. Decomposes hydrogen peroxide into water and oxygen; serves to protect cells from the toxic effects of hydrogen peroxide. This is Catalase (katA) from Streptomyces coelicolor (strain ATCC BAA-471 / A3(2) / M145).